A 498-amino-acid polypeptide reads, in one-letter code: Isocitrate dehydrogenase [NADP], mitochondrial (498 aa).

Residues 164 to 166 and Arg171 each bind NADP(+); that span reads TIT. Thr166 serves as a coordination point for substrate. Substrate is bound by residues 183–189, Arg198, and Arg221; that span reads SPNGTIR. Residue Asp339 coordinates Mn(2+). Lys347 contacts NADP(+). Asp362 contributes to the Mn(2+) binding site. NADP(+) contacts are provided by residues 397–402 and Asn415; that span reads GTVTRH.

Belongs to the isocitrate and isopropylmalate dehydrogenases family. Mg(2+) is required as a cofactor. Requires Mn(2+) as cofactor.

It localises to the mitochondrion. The enzyme catalyses D-threo-isocitrate + NADP(+) = 2-oxoglutarate + CO2 + NADPH. The polypeptide is Isocitrate dehydrogenase [NADP], mitochondrial (icdA) (Aspergillus niger).